We begin with the raw amino-acid sequence, 185 residues long: Elongation factor P (185 aa).

This sequence belongs to the elongation factor P family.

It localises to the cytoplasm. It participates in protein biosynthesis; polypeptide chain elongation. Involved in peptide bond synthesis. Stimulates efficient translation and peptide-bond synthesis on native or reconstituted 70S ribosomes in vitro. Probably functions indirectly by altering the affinity of the ribosome for aminoacyl-tRNA, thus increasing their reactivity as acceptors for peptidyl transferase. The polypeptide is Elongation factor P (Mesomycoplasma hyopneumoniae (strain J / ATCC 25934 / NCTC 10110) (Mycoplasma hyopneumoniae)).